The following is a 277-amino-acid chain: Release factor glutamine methyltransferase (277 aa).

S-adenosyl-L-methionine contacts are provided by residues 117–121 (GTGTG), Asp140, Trp168, and Asn183. Position 183 to 186 (183 to 186 (NPPY)) interacts with substrate.

The protein belongs to the protein N5-glutamine methyltransferase family. PrmC subfamily.

The enzyme catalyses L-glutaminyl-[peptide chain release factor] + S-adenosyl-L-methionine = N(5)-methyl-L-glutaminyl-[peptide chain release factor] + S-adenosyl-L-homocysteine + H(+). Methylates the class 1 translation termination release factors RF1/PrfA and RF2/PrfB on the glutamine residue of the universally conserved GGQ motif. The polypeptide is Release factor glutamine methyltransferase (Shigella flexneri).